The primary structure comprises 499 residues: Probable cytochrome P450 cyp-35D1 (499 aa).

C444 is a heme binding site.

Belongs to the cytochrome P450 family. It depends on heme as a cofactor. Expressed in hypodermis, intestine and vulva upon thiabendazole (TBZ) exposure.

Functionally, cytochromes P450 are a group of heme-thiolate monooxygenases. They oxidize a variety of structurally unrelated compounds, including steroids, fatty acids, and xenobiotics. Involved in the oxidative metabolism of thiabendazole (TBZ). Catalyzes the conversion of TBZ to its hydroxylated form. The protein is Probable cytochrome P450 cyp-35D1 of Caenorhabditis elegans.